A 121-amino-acid chain; its full sequence is Nitrogen fixation nifHD region GlnB-like protein 2 (121 aa).

It belongs to the P(II) protein family.

Functionally, could be involved in the regulation of nitrogen fixation. This is Nitrogen fixation nifHD region GlnB-like protein 2 (glnBB) from Methanothermobacter marburgensis (strain ATCC BAA-927 / DSM 2133 / JCM 14651 / NBRC 100331 / OCM 82 / Marburg) (Methanobacterium thermoautotrophicum).